The following is a 264-amino-acid chain: Undecaprenyl-diphosphatase 2 (264 aa).

Helical transmembrane passes span 29-49 (GSAF…SYFW), 77-97 (SWIV…SGVL), 107-127 (LTVI…AEIF), 137-157 (ASLA…IPGV), 180-200 (FSFL…LWEL), 212-232 (VLAT…WGLM), and 243-263 (FVIY…MGWL).

The protein belongs to the UppP family.

The protein resides in the cell inner membrane. The catalysed reaction is di-trans,octa-cis-undecaprenyl diphosphate + H2O = di-trans,octa-cis-undecaprenyl phosphate + phosphate + H(+). Functionally, catalyzes the dephosphorylation of undecaprenyl diphosphate (UPP). Confers resistance to bacitracin. The protein is Undecaprenyl-diphosphatase 2 of Mesorhizobium japonicum (strain LMG 29417 / CECT 9101 / MAFF 303099) (Mesorhizobium loti (strain MAFF 303099)).